The following is a 430-amino-acid chain: Serine--tRNA ligase (430 aa).

237 to 239 (TAE) is a binding site for L-serine. 268–270 (RAE) provides a ligand contact to ATP. Residue Glu291 coordinates L-serine. 355-358 (EVSS) contacts ATP. Ser391 serves as a coordination point for L-serine.

It belongs to the class-II aminoacyl-tRNA synthetase family. Type-1 seryl-tRNA synthetase subfamily. As to quaternary structure, homodimer. The tRNA molecule binds across the dimer.

It is found in the cytoplasm. The enzyme catalyses tRNA(Ser) + L-serine + ATP = L-seryl-tRNA(Ser) + AMP + diphosphate + H(+). It catalyses the reaction tRNA(Sec) + L-serine + ATP = L-seryl-tRNA(Sec) + AMP + diphosphate + H(+). Its pathway is aminoacyl-tRNA biosynthesis; selenocysteinyl-tRNA(Sec) biosynthesis; L-seryl-tRNA(Sec) from L-serine and tRNA(Sec): step 1/1. In terms of biological role, catalyzes the attachment of serine to tRNA(Ser). Is also able to aminoacylate tRNA(Sec) with serine, to form the misacylated tRNA L-seryl-tRNA(Sec), which will be further converted into selenocysteinyl-tRNA(Sec). This chain is Serine--tRNA ligase, found in Baumannia cicadellinicola subsp. Homalodisca coagulata.